Reading from the N-terminus, the 188-residue chain is Inosine triphosphate pyrophosphatase (188 aa).

Threonine 12–lysine 17 is a binding site for ITP. Glutamate 40 contacts Mg(2+). Residues lysine 52, aspartate 68–threonine 69, lysine 85, phenylalanine 144–aspartate 147, lysine 165, and histidine 170–arginine 171 each bind ITP.

Belongs to the HAM1 NTPase family. As to quaternary structure, homodimer. The cofactor is Mg(2+). Mn(2+) serves as cofactor.

The protein localises to the cytoplasm. The protein resides in the nucleus. It carries out the reaction ITP + H2O = IMP + diphosphate + H(+). The enzyme catalyses dITP + H2O = dIMP + diphosphate + H(+). It catalyses the reaction XTP + H2O = XMP + diphosphate + H(+). Its function is as follows. Pyrophosphatase that hydrolyzes non-canonical purine nucleotides such as inosine triphosphate (ITP), deoxyinosine triphosphate (dITP) or xanthosine 5'-triphosphate (XTP) to their respective monophosphate derivatives. The enzyme does not distinguish between the deoxy- and ribose forms. Probably excludes non-canonical purines from RNA and DNA precursor pools, thus preventing their incorporation into RNA and DNA and avoiding chromosomal lesions. The sequence is that of Inosine triphosphate pyrophosphatase from Phaeosphaeria nodorum (strain SN15 / ATCC MYA-4574 / FGSC 10173) (Glume blotch fungus).